A 219-amino-acid chain; its full sequence is N-(5'-phosphoribosyl)anthranilate isomerase (219 aa).

This sequence belongs to the TrpF family.

The enzyme catalyses N-(5-phospho-beta-D-ribosyl)anthranilate = 1-(2-carboxyphenylamino)-1-deoxy-D-ribulose 5-phosphate. It participates in amino-acid biosynthesis; L-tryptophan biosynthesis; L-tryptophan from chorismate: step 3/5. This chain is N-(5'-phosphoribosyl)anthranilate isomerase, found in Bordetella avium (strain 197N).